Consider the following 391-residue polypeptide: Probable tRNA sulfurtransferase (391 aa).

One can recognise a THUMP domain in the interval 60 to 167 (DETVAALQRV…NKAYVYSNTL (108 aa)). Residues 184–185 (LL), 209–210 (YF), R266, G288, and Q297 contribute to the ATP site.

It belongs to the ThiI family.

Its subcellular location is the cytoplasm. The enzyme catalyses [ThiI sulfur-carrier protein]-S-sulfanyl-L-cysteine + a uridine in tRNA + 2 reduced [2Fe-2S]-[ferredoxin] + ATP + H(+) = [ThiI sulfur-carrier protein]-L-cysteine + a 4-thiouridine in tRNA + 2 oxidized [2Fe-2S]-[ferredoxin] + AMP + diphosphate. It carries out the reaction [ThiS sulfur-carrier protein]-C-terminal Gly-Gly-AMP + S-sulfanyl-L-cysteinyl-[cysteine desulfurase] + AH2 = [ThiS sulfur-carrier protein]-C-terminal-Gly-aminoethanethioate + L-cysteinyl-[cysteine desulfurase] + A + AMP + 2 H(+). Its pathway is cofactor biosynthesis; thiamine diphosphate biosynthesis. Catalyzes the ATP-dependent transfer of a sulfur to tRNA to produce 4-thiouridine in position 8 of tRNAs, which functions as a near-UV photosensor. Also catalyzes the transfer of sulfur to the sulfur carrier protein ThiS, forming ThiS-thiocarboxylate. This is a step in the synthesis of thiazole, in the thiamine biosynthesis pathway. The sulfur is donated as persulfide by IscS. This Lachnoclostridium phytofermentans (strain ATCC 700394 / DSM 18823 / ISDg) (Clostridium phytofermentans) protein is Probable tRNA sulfurtransferase.